The sequence spans 280 residues: Orotidine 5'-phosphate decarboxylase (280 aa).

Substrate-binding positions include Asp-40, 62–64, 93–102, Tyr-228, and Arg-246; these read KTH and DRKFVDIGNT. Lys-95 serves as the catalytic Proton donor.

This sequence belongs to the OMP decarboxylase family.

The enzyme catalyses orotidine 5'-phosphate + H(+) = UMP + CO2. It functions in the pathway pyrimidine metabolism; UMP biosynthesis via de novo pathway; UMP from orotate: step 2/2. This chain is Orotidine 5'-phosphate decarboxylase (PYRG), found in Solorina crocea.